The chain runs to 268 residues: NH(3)-dependent NAD(+) synthetase (268 aa).

46–53 is an ATP binding site; it reads GVSGGQDS. Residue D52 participates in Mg(2+) binding. R140 lines the deamido-NAD(+) pocket. Residue T160 participates in ATP binding. Residue E165 coordinates Mg(2+). Residues K173 and D180 each coordinate deamido-NAD(+). K189 is an ATP binding site. Residue 260-261 participates in deamido-NAD(+) binding; it reads HK.

This sequence belongs to the NAD synthetase family. Homodimer.

The catalysed reaction is deamido-NAD(+) + NH4(+) + ATP = AMP + diphosphate + NAD(+) + H(+). Its pathway is cofactor biosynthesis; NAD(+) biosynthesis; NAD(+) from deamido-NAD(+) (ammonia route): step 1/1. Functionally, catalyzes the ATP-dependent amidation of deamido-NAD to form NAD. Uses ammonia as a nitrogen source. This Buchnera aphidicola subsp. Acyrthosiphon pisum (strain Tuc7) protein is NH(3)-dependent NAD(+) synthetase.